A 203-amino-acid chain; its full sequence is Small ribosomal subunit protein uS4c (203 aa).

The region spanning 89–152 (MRLDNILFRL…QSRTLIQNSL (64 aa)) is the S4 RNA-binding domain.

The protein belongs to the universal ribosomal protein uS4 family. Part of the 30S ribosomal subunit. Contacts protein S5. The interaction surface between S4 and S5 is involved in control of translational fidelity.

Its subcellular location is the plastid. Functionally, one of the primary rRNA binding proteins, it binds directly to 16S rRNA where it nucleates assembly of the body of the 30S subunit. With S5 and S12 plays an important role in translational accuracy. The polypeptide is Small ribosomal subunit protein uS4c (rps4) (Orobanche minor (Small broomrape)).